The sequence spans 321 residues: Serpentine receptor class delta-63 (321 aa).

7 helical membrane passes run 14–34 (LVYM…YNFT), 41–61 (VKYF…MAFA), 83–103 (YIGP…GIVV), 128–148 (LWTL…IVII), 190–208 (AAMS…GTYW), 240–260 (NFQI…YFMI), and 273–293 (TITV…IYFI).

It belongs to the nematode receptor-like protein srd family.

It is found in the membrane. The chain is Serpentine receptor class delta-63 (srd-63) from Caenorhabditis elegans.